An 87-amino-acid polypeptide reads, in one-letter code: MKPGIHPDYRPVLFHDTSADVFFLIGSTAETDKTHTHTDGKTYPYVTLDVSSASHPVYTGEQRKTKSEGRVAGFNKRFAGFVGGKGA.

It belongs to the bacterial ribosomal protein bL31 family. Type B subfamily. Part of the 50S ribosomal subunit.

The polypeptide is Large ribosomal subunit protein bL31B (Pseudomonas paraeruginosa (strain DSM 24068 / PA7) (Pseudomonas aeruginosa (strain PA7))).